Here is a 545-residue protein sequence, read N- to C-terminus: Reticulon-2 (545 aa).

Disordered stretches follow at residues 1-183 and 199-250; these read MGQV…ETGE and SPEV…EREP. Over residues 14–25 the composition is skewed to low complexity; the sequence is APSTASSTPDST. Positions 32 to 43 are enriched in basic and acidic residues; it reads SDFRELHTAREF. Ser-44 bears the Phosphoserine mark. Residues 135–146 are compositionally biased toward basic and acidic residues; that stretch reads RPLEDLRLRLDH. Residues 157 to 166 show a composition bias toward low complexity; that stretch reads GEDSSTSSST. Over residues 199 to 230 the composition is skewed to polar residues; that stretch reads SPEVLTPQLSPGSGTPQAGTPSPSRSRDSNSG. Phosphoserine occurs at positions 227 and 229. Positions 345-545 constitute a Reticulon domain; the sequence is VADLLYWKDT…AVSGSKAKAE (201 aa). The next 2 membrane-spanning stretches (helical) occupy residues 368–388 and 463–483; these read LLCLLHFSIVSVAAHLALLLL and LLFYILTFVGAIFNGLTLLIL.

As to quaternary structure, interacts with isoform 1 but not isoform 3 of SPAST. Interacts with BACE1. Interacts (via first transmembrane domain) with ARL6IP5/GTRAP3-18. Interacts (via N-terminus) with SLC1A1/EAAC1; the interaction promotes cell surface expression of SLC1A1. In terms of assembly, interacts with TMEM33. As to expression, highly expressed in skeletal muscle.

Its subcellular location is the endoplasmic reticulum membrane. The protein localises to the sarcoplasmic reticulum membrane. The protein resides in the cell membrane. It localises to the sarcolemma. It is found in the T-tubule. Its subcellular location is the cytoplasm. The protein localises to the myofibril. The protein resides in the sarcomere. It localises to the z line. It is found in the cytoskeleton. Inhibits amyloid precursor protein processing, probably by blocking BACE1 activity. Enhances trafficking of the glutamate transporter SLC1A1/EAAC1 from the endoplasmic reticulum to the cell surface. Plays a role in the translocation of SLC2A4/GLUT4 from intracellular membranes to the cell membrane which facilitates the uptake of glucose into the cell. This chain is Reticulon-2 (RTN2), found in Homo sapiens (Human).